The chain runs to 193 residues: Deoxycytidylate deaminase (193 aa).

The region spanning 1-171 (MKASTVLQIA…DILRNAGIEV (171 aa)) is the CMP/dCMP-type deaminase domain. Residues cysteine 19, cysteine 49, histidine 94, glutamate 102, and histidine 104 each coordinate Zn(2+). Residue glutamate 106 is the Proton donor of the active site. 2 residues coordinate Zn(2+): cysteine 132 and cysteine 135. Tyrosine 153 is a substrate binding site.

Belongs to the cytidine and deoxycytidylate deaminase family. As to quaternary structure, homohexamer. The cofactor is Zn(2+).

It catalyses the reaction dCMP + H2O + H(+) = dUMP + NH4(+). With respect to regulation, allosteric enzyme whose activity is greatly influenced by the end products of its metabolic pathway, dCTP and dTTP. Supplies the nucleotide substrate for thymidylate synthetase. The chain is Deoxycytidylate deaminase (CD) from Escherichia coli (Bacteriophage T4).